The sequence spans 342 residues: Succinylglutamate desuccinylase (342 aa).

Zn(2+)-binding residues include H63, E66, and H159. Residue E222 is part of the active site.

This sequence belongs to the AspA/AstE family. Succinylglutamate desuccinylase subfamily. Requires Zn(2+) as cofactor.

It catalyses the reaction N-succinyl-L-glutamate + H2O = L-glutamate + succinate. The protein operates within amino-acid degradation; L-arginine degradation via AST pathway; L-glutamate and succinate from L-arginine: step 5/5. Transforms N(2)-succinylglutamate into succinate and glutamate. This Paraburkholderia xenovorans (strain LB400) protein is Succinylglutamate desuccinylase.